The chain runs to 388 residues: MTDRVALRAGVPPFYVMDVWLAAAERQRTHGDLVNLSAGQPSAGAPEPVRAAAAAALHLNQLGYSVALGIPELRDAIAADYQRRHGITVEPDAVVITTGSSGGFLLAFLACFDAGDRVAMASPGYPCYRNILSALGCEVVEIPCGPQTRFQPTAQMLAEIDPPLRGVVVASPANPTGTVIPPEELAAIASWCDASDVRLISDEVYHGLVYQGAPQTSCAWQTSRNAVVVNSFSKYYAMTGWRLGWLLVPTVLRRAVDCLTGNFTICPPVLSQIAAVSAFTPEATAEADGNLASYAINRSLLLDGLRRIGIDRLAPTDGAFYVYADVSDFTSDSLAFCSKLLADTGVAIAPGIDFDTARGGSFVRISFAGPSGDIEEALRRIGSWLPSQ.

Position 234 is an N6-(pyridoxal phosphate)lysine (K234).

Belongs to the class-I pyridoxal-phosphate-dependent aminotransferase family. Pyridoxal 5'-phosphate serves as cofactor.

It carries out the reaction L-valine + pyruvate = 3-methyl-2-oxobutanoate + L-alanine. This Mycobacterium tuberculosis (strain ATCC 25618 / H37Rv) protein is Valine--pyruvate aminotransferase.